We begin with the raw amino-acid sequence, 350 residues long: Histidinol-phosphate aminotransferase 1 (350 aa).

The residue at position 211 (Lys211) is an N6-(pyridoxal phosphate)lysine.

The protein belongs to the class-II pyridoxal-phosphate-dependent aminotransferase family. Histidinol-phosphate aminotransferase subfamily. In terms of assembly, homodimer. Pyridoxal 5'-phosphate serves as cofactor.

The enzyme catalyses L-histidinol phosphate + 2-oxoglutarate = 3-(imidazol-4-yl)-2-oxopropyl phosphate + L-glutamate. Its pathway is amino-acid biosynthesis; L-histidine biosynthesis; L-histidine from 5-phospho-alpha-D-ribose 1-diphosphate: step 7/9. This chain is Histidinol-phosphate aminotransferase 1, found in Trichormus variabilis (strain ATCC 29413 / PCC 7937) (Anabaena variabilis).